We begin with the raw amino-acid sequence, 366 residues long: Inhibin alpha chain (366 aa).

Positions 1-20 are cleaved as a signal peptide; sequence MVSQRSLLLLLLLTLRDVDS. A propeptide spanning residues 21–63 is cleaved from the precursor; the sequence is CQGPELVRELVLAKVKALFLDALGPPAMDGEGGDPGIRRLPRR. A propeptide spans 64-233 (inhibin alpha N-terminal region); the sequence is HAVGGFMHRT…APSAGERARR (170 aa). Residues Asn147 and Asn269 are each glycosylated (N-linked (GlcNAc...) asparagine). Cystine bridges form between Cys263/Cys328, Cys292/Cys363, and Cys296/Cys365.

Belongs to the TGF-beta family. As to quaternary structure, dimeric, linked by one or more disulfide bonds. Activin B is a dimer of alpha and beta-B. Inhibin A is a dimer of alpha and beta-A. Inhibin B is a dimer of alpha and beta-B. Interacts with TGFBR3L; this interaction regulates female fertility. Proteolytic processing yields a number of bioactive forms, consisting either solely of the mature alpha chain, of the most N-terminal propeptide linked through a disulfide bond to the mature alpha chain, or of the entire proprotein.

The protein localises to the secreted. Inhibins and activins inhibit and activate, respectively, the secretion of follitropin by the pituitary gland. Inhibins/activins are involved in regulating a number of diverse functions such as hypothalamic and pituitary hormone secretion, gonadal hormone secretion, germ cell development and maturation, erythroid differentiation, insulin secretion, nerve cell survival, embryonic axial development or bone growth, depending on their subunit composition. Inhibins appear to oppose the functions of activins. In terms of biological role, inhibin A is a dimer of alpha/INHA and beta-A/INHBA that functions as a feedback regulator in the hypothalamic-pituitary-gonadal (HPG) axis. Inhibits the secretion of FSH from the anterior pituitary gland by acting on pituitary gonadotrope cells. Antagonizes activin A by binding to the proteoglycan, betaglycan, and forming a stable complex with and, thereby, sequestering type II activin receptors while excluding type I receptor. Functionally, inhibin B is a dimer of alpha and beta-B that plays a crucial role in the regulation of the reproductive system by inhibiting the secretion of follicle-stimulating hormone (FSH) from the anterior pituitary gland. Thereby, maintains reproductive homeostasis in both males and females. Acts as a more potent suppressor of FSH release than inhibin A. Functions as competitive receptor antagonist binding activin type II receptors with high affinity in the presence of the TGF-beta type III coreceptor/TGFBR3L. The polypeptide is Inhibin alpha chain (Inha) (Mus musculus (Mouse)).